The primary structure comprises 199 residues: Protein-methionine-sulfoxide reductase heme-binding subunit MsrQ (199 aa).

A run of 6 helical transmembrane segments spans residues 8–28 (IAWL…WLFW), 54–74 (FLLA…PLLI), 82–102 (LWCF…ELGI), 116–136 (PYLT…ATST), 149–169 (LLHN…LWSV), and 171–191 (IVSP…ACRY).

Belongs to the MsrQ family. As to quaternary structure, heterodimer of a catalytic subunit (MsrP) and a heme-binding subunit (MsrQ). The cofactor is FMN. It depends on heme b as a cofactor.

The protein resides in the cell inner membrane. Part of the MsrPQ system that repairs oxidized periplasmic proteins containing methionine sulfoxide residues (Met-O), using respiratory chain electrons. Thus protects these proteins from oxidative-stress damage caused by reactive species of oxygen and chlorine generated by the host defense mechanisms. MsrPQ is essential for the maintenance of envelope integrity under bleach stress, rescuing a wide series of structurally unrelated periplasmic proteins from methionine oxidation. MsrQ provides electrons for reduction to the reductase catalytic subunit MsrP, using the quinone pool of the respiratory chain. This Klebsiella pneumoniae (strain 342) protein is Protein-methionine-sulfoxide reductase heme-binding subunit MsrQ.